A 981-amino-acid chain; its full sequence is Transcription factor TAC1 (981 aa).

Residues 1-29 are compositionally biased toward polar residues; the sequence is MDTSSSSGTHPSTFNNLTKQQELTGNDPN. Residues 1–33 form a disordered region; sequence MDTSSSSGTHPSTFNNLTKQQELTGNDPNDTNR. The zn(2)-C6 fungal-type DNA-binding region spans 40–68; the sequence is CDSCRRKKIKCNGSYPCGNCIQAKNTSNC. 3 disordered regions span residues 74–106, 165–199, and 868–902; these read PVRKKLKPTKQDNKSTANSNGVSKRKYNDTFSG, HSNSSMFNNNSLSPTPSEDFNKSAFDSEEQQTSHS, and LRDNSTNHGQNNMNPSPTITNNTYNSNINTGSNST. The span at 165–177 shows a compositional bias: low complexity; the sequence is HSNSSMFNNNSLS. The segment covering 868 to 880 has biased composition (polar residues); sequence LRDNSTNHGQNNM. A compositionally biased stretch (low complexity) spans 881–902; that stretch reads NPSPTITNNTYNSNINTGSNST.

In terms of processing, phosphorylated. Phosphorylation leads to hyperactivation.

It localises to the nucleus. Its activity is regulated as follows. Drugs such as farnesol and 1-dodecanol are able to hyperactivate TAC1 probably via phosphorylation by the Mediator complex. In terms of biological role, transcriptional activator of drug-responsive genes including the ABC-type transporters CDR1 and CDR2, as well as HSP12 and RTA3. Binds the cis-acting regulatory drug-responsive elements (DREs) with the consensus sequence 5'-CGGAWATCGGATATTTTTTT-3' in the promoters of target genes. The polypeptide is Transcription factor TAC1 (Candida albicans (strain SC5314 / ATCC MYA-2876) (Yeast)).